Reading from the N-terminus, the 781-residue chain is Acyl-CoA dehydrogenase family member 11 (781 aa).

The residue at position 177 (K177) is an N6-acetyllysine. Phosphotyrosine is present on Y325. K392 is modified (N6-succinyllysine). FAD-binding positions include 505–515 (FCMTEPDVASS), 513–515 (ASS), 539–541 (WSS), and S541. Residue S515 coordinates substrate. 630 to 633 (GPGR) lines the substrate pocket. FAD is bound by residues R658, Q728, and 728–732 (QVCGG). G756 contributes to the substrate binding site. FAD contacts are provided by residues 757 to 759 (PDE) and E759.

Belongs to the acyl-CoA dehydrogenase family. As to quaternary structure, homodimer. It depends on FAD as a cofactor.

The protein localises to the peroxisome. It is found in the mitochondrion membrane. The catalysed reaction is a 2,3-saturated acyl-CoA + oxidized [electron-transfer flavoprotein] + H(+) = a (2E)-enoyl-CoA + reduced [electron-transfer flavoprotein]. The enzyme catalyses docosanoyl-CoA + oxidized [electron-transfer flavoprotein] + H(+) = (2E)-docosenoyl-CoA + reduced [electron-transfer flavoprotein]. It carries out the reaction tetracosanoyl-CoA + oxidized [electron-transfer flavoprotein] + H(+) = (2E)-tetracosenoyl-CoA + reduced [electron-transfer flavoprotein]. It catalyses the reaction eicosanoyl-CoA + oxidized [electron-transfer flavoprotein] + H(+) = (2E)-eicosenoyl-CoA + reduced [electron-transfer flavoprotein]. The catalysed reaction is hexacosanoyl-CoA + oxidized [electron-transfer flavoprotein] + H(+) = (2E)-hexacosenoyl-CoA + reduced [electron-transfer flavoprotein]. The enzyme catalyses tricosanoyl-CoA + oxidized [electron-transfer flavoprotein] + H(+) = (2E)-tricosenoyl-CoA + reduced [electron-transfer flavoprotein]. It participates in lipid metabolism; fatty acid beta-oxidation. In terms of biological role, acyl-CoA dehydrogenase, that exhibits maximal activity towards saturated C22-CoA. Probably participates in beta-oxydation and energy production but could also play a role in the metabolism of specific fatty acids to control fatty acids composition of cellular lipids in brain. The polypeptide is Acyl-CoA dehydrogenase family member 11 (ACAD11) (Pongo abelii (Sumatran orangutan)).